Here is a 97-residue protein sequence, read N- to C-terminus: Small ribosomal subunit protein bS6 (97 aa).

It belongs to the bacterial ribosomal protein bS6 family.

Its function is as follows. Binds together with bS18 to 16S ribosomal RNA. This Limosilactobacillus fermentum (strain NBRC 3956 / LMG 18251) (Lactobacillus fermentum) protein is Small ribosomal subunit protein bS6.